The sequence spans 155 residues: SsrA-binding protein (155 aa).

The segment at 136–155 is disordered; that stretch reads RESLKRRQDQRDMQRAMKNY.

It belongs to the SmpB family.

Its subcellular location is the cytoplasm. Required for rescue of stalled ribosomes mediated by trans-translation. Binds to transfer-messenger RNA (tmRNA), required for stable association of tmRNA with ribosomes. tmRNA and SmpB together mimic tRNA shape, replacing the anticodon stem-loop with SmpB. tmRNA is encoded by the ssrA gene; the 2 termini fold to resemble tRNA(Ala) and it encodes a 'tag peptide', a short internal open reading frame. During trans-translation Ala-aminoacylated tmRNA acts like a tRNA, entering the A-site of stalled ribosomes, displacing the stalled mRNA. The ribosome then switches to translate the ORF on the tmRNA; the nascent peptide is terminated with the 'tag peptide' encoded by the tmRNA and targeted for degradation. The ribosome is freed to recommence translation, which seems to be the essential function of trans-translation. The protein is SsrA-binding protein of Nostoc sp. (strain PCC 7120 / SAG 25.82 / UTEX 2576).